A 327-amino-acid polypeptide reads, in one-letter code: uncharacterized protein (327 aa).

Positions 129-306 (TPLQNQEATT…DNKKTVTTSS (178 aa)) are disordered. Positions 130–144 (PLQNQEATTSPTIES) are enriched in polar residues. Basic and acidic residues-rich tracts occupy residues 184–196 (KSVE…DRNV) and 233–276 (TKDE…EKIV).

This is an uncharacterized protein from Caenorhabditis elegans.